The following is a 452-amino-acid chain: MTKKIIAKKIIALVGRPNVGKSTLFNRLSMRKKAIVHDLPGVTRDRKYTDGRIGSFEFSLIDTPGLEENPDSFGKRLMEQTTKAINEADLICFMVDSRSGILPDDKLLSDFVRKYNKPAVLVINKCEKAFDFDKEYYKLGFDSMVAISAEHGTGMIDLYDEIIAKLPEEDSAEAEIHDPIKGDCLQIVVSGRPNAGKSTFINALINDERLLTGPEAGITRESIEIDWQYKGNHIKLIDTAGLRKKATITESLEKLSASDAINSIKFANTVILMIDALSPLKQQDLNIASHVANEGRSIVIVVNKWDLIKESEKEAFKEEFYYQINTTLPQVKGVPALFISAKNKQNIADVLDSCIKIYKTWNKKITTSKLNEWLNFTTEAHPLPLQKGGKRVRVKYMTQTKTRPPTFKLFSNNPEKITDSYTRYLVNNMREAFDMPGVPIRFNYIKTKNPYV.

2 EngA-type G domains span residues 9–170 (KIIA…PEED) and 185–362 (LQIV…KTWN). Residues 15–22 (GRPNVGKS), 62–66 (DTPGL), 124–127 (NKCE), 191–198 (GRPNAGKS), 238–242 (DTAGL), and 303–306 (NKWD) each bind GTP. Residues 363–448 (KKITTSKLNE…PIRFNYIKTK (86 aa)) enclose the KH-like domain.

The protein belongs to the TRAFAC class TrmE-Era-EngA-EngB-Septin-like GTPase superfamily. EngA (Der) GTPase family. As to quaternary structure, associates with the 50S ribosomal subunit.

GTPase that plays an essential role in the late steps of ribosome biogenesis. This Rickettsia bellii (strain RML369-C) protein is GTPase Der.